The sequence spans 752 residues: Photosystem I P700 chlorophyll a apoprotein A1 (752 aa).

A run of 8 helical transmembrane segments spans residues 73–96 (IFSA…FHGA), 159–182 (LYCT…FHYH), 198–222 (MNHH…HLSL), 294–312 (TAHH…GHMY), 349–372 (WHAQ…HHMY), 388–414 (LSLF…IFMV), 436–458 (AIVS…LYIH), and 533–551 (FMVH…LILV). [4Fe-4S] cluster is bound by residues Cys575 and Cys584. The next 2 membrane-spanning stretches (helical) occupy residues 591-612 (HVFL…HFSW) and 666-688 (LSAY…MFLF). Residue His677 coordinates chlorophyll a'. Residues Met685 and Tyr693 each contribute to the chlorophyll a site. Trp694 lines the phylloquinone pocket. The helical transmembrane segment at 726–746 (AVGVAHYLLGGIGTTWAFFLA) threads the bilayer.

Belongs to the PsaA/PsaB family. The PsaA/B heterodimer binds the P700 chlorophyll special pair and subsequent electron acceptors. PSI consists of a core antenna complex that captures photons, and an electron transfer chain that converts photonic excitation into a charge separation. The eukaryotic PSI reaction center is composed of at least 11 subunits. P700 is a chlorophyll a/chlorophyll a' dimer, A0 is one or more chlorophyll a, A1 is one or both phylloquinones and FX is a shared 4Fe-4S iron-sulfur center. serves as cofactor.

It localises to the plastid. The protein localises to the chloroplast thylakoid membrane. It carries out the reaction reduced [plastocyanin] + hnu + oxidized [2Fe-2S]-[ferredoxin] = oxidized [plastocyanin] + reduced [2Fe-2S]-[ferredoxin]. In terms of biological role, psaA and PsaB bind P700, the primary electron donor of photosystem I (PSI), as well as the electron acceptors A0, A1 and FX. PSI is a plastocyanin/cytochrome c6-ferredoxin oxidoreductase, converting photonic excitation into a charge separation, which transfers an electron from the donor P700 chlorophyll pair to the spectroscopically characterized acceptors A0, A1, FX, FA and FB in turn. Oxidized P700 is reduced on the lumenal side of the thylakoid membrane by plastocyanin or cytochrome c6. This is Photosystem I P700 chlorophyll a apoprotein A1 from Porphyra purpurea (Red seaweed).